The sequence spans 171 residues: AN1-type zinc finger protein 2A (171 aa).

2 consecutive AN1-type zinc fingers follow at residues 4-52 and 94-142; these read PDLG…KKDV and KVFT…SSAS. 16 residues coordinate Zn(2+): Cys10, Cys15, Cys25, Cys28, Cys33, His36, His42, Cys44, Cys100, Cys105, Cys115, Cys118, Cys123, His126, His132, and Cys134. The tract at residues 134–171 is disordered; sequence CQAGSSSASRGRTSTSRAAEQKPSGVSWLAQRLRRTVK. A compositionally biased stretch (low complexity) spans 136-151; it reads AGSSSASRGRTSTSRA.

It localises to the cytoplasm. The protein localises to the nucleus. This Mus musculus (Mouse) protein is AN1-type zinc finger protein 2A (Zfand2a).